Consider the following 218-residue polypeptide: Small ribosomal subunit protein uS3c (218 aa).

Residues 43-118 form the KH type-2 domain; that stretch reads IKNYVQKNMR…KLNIAITRIA (76 aa).

The protein belongs to the universal ribosomal protein uS3 family. As to quaternary structure, part of the 30S ribosomal subunit.

Its subcellular location is the plastid. It is found in the chloroplast. In Buxus microphylla (Littleleaf boxwood), this protein is Small ribosomal subunit protein uS3c (rps3).